The primary structure comprises 295 residues: Putative S-adenosyl-L-methionine-dependent methyltransferase Mvan_0910 (295 aa).

S-adenosyl-L-methionine is bound by residues Asp126 and 155-156; that span reads DL.

This sequence belongs to the UPF0677 family.

Its function is as follows. Exhibits S-adenosyl-L-methionine-dependent methyltransferase activity. This is Putative S-adenosyl-L-methionine-dependent methyltransferase Mvan_0910 from Mycolicibacterium vanbaalenii (strain DSM 7251 / JCM 13017 / BCRC 16820 / KCTC 9966 / NRRL B-24157 / PYR-1) (Mycobacterium vanbaalenii).